The sequence spans 228 residues: DNA mismatch repair protein MutH (228 aa).

This sequence belongs to the MutH family.

It is found in the cytoplasm. Its function is as follows. Sequence-specific endonuclease that cleaves unmethylated GATC sequences. It is involved in DNA mismatch repair. This is DNA mismatch repair protein MutH from Yersinia pseudotuberculosis serotype O:1b (strain IP 31758).